Consider the following 200-residue polypeptide: Recombination protein RecR (200 aa).

A C4-type zinc finger spans residues 57–72 (CRSCRTLTEEELCPQC). The region spanning 80–175 (TLLCVVEGPT…VASRIAHGVP (96 aa)) is the Toprim domain.

The protein belongs to the RecR family.

Its function is as follows. May play a role in DNA repair. It seems to be involved in an RecBC-independent recombinational process of DNA repair. It may act with RecF and RecO. This is Recombination protein RecR from Pseudomonas savastanoi pv. phaseolicola (strain 1448A / Race 6) (Pseudomonas syringae pv. phaseolicola (strain 1448A / Race 6)).